The sequence spans 250 residues: Bacteriorhodopsin (250 aa).

Residues 1-18 (MCCAALAPPMAATVGPES) are Extracellular-facing. A helical transmembrane segment spans residues 19-37 (IWLWIGTIGMTLGTLYFVG). The Cytoplasmic segment spans residues 38–51 (RGRGVRDRKMQEFY). Residues 52–70 (IITIFITTIAAAMYFAMAT) traverse the membrane as a helical segment. Over 71-86 (GFGVTEVMVGDEALTI) the chain is Extracellular. The chain crosses the membrane as a helical span at residues 87-104 (YWARYADWLFTTPLLLLD). Residues 105-115 (LSLLAGANRNT) lie on the Cytoplasmic side of the membrane. The helical transmembrane segment at 116–135 (IATLIGLDVFMIGTGAIAAL) threads the bilayer. The Extracellular portion of the chain corresponds to 136-142 (SSTPGTR). Residues 143–162 (IAWWAISTGALLALLYVLVG) form a helical membrane-spanning segment. Residues 163–180 (TLSENARNRAPEVASLFG) are Cytoplasmic-facing. A helical transmembrane segment spans residues 181–199 (RLRNLVIALWFLYPVVWIL). Residues 200–212 (GTEGTFGILPLYW) are Extracellular-facing. The helical transmembrane segment at 213–232 (ETAAFMVLDLSAKVGFGVIL) threads the bilayer. At lysine 225 the chain carries N6-(retinylidene)lysine. Residues 233 to 250 (LQSRSVLERVATPTAAPT) lie on the Cytoplasmic side of the membrane.

Belongs to the archaeal/bacterial/fungal opsin family.

The protein resides in the cell membrane. In terms of biological role, light-driven proton pump. The sequence is that of Bacteriorhodopsin (bop) from Haloterrigena sp. (strain arg-4).